A 559-amino-acid chain; its full sequence is CTP synthase (559 aa).

An amidoligase domain region spans residues 1–270 (MTKFVFVTGG…DGLICDKLRI (270 aa)). Ser13 contacts CTP. Ser13 is a UTP binding site. Residues 14–19 (SLGKGI) and Asp71 each bind ATP. Mg(2+)-binding residues include Asp71 and Glu144. CTP contacts are provided by residues 151–153 (DIE), 191–196 (KTKPTQ), and Lys227. UTP-binding positions include 191 to 196 (KTKPTQ) and Lys227. The Glutamine amidotransferase type-1 domain occupies 295–547 (SIAMVGKYVD…IKAALDHKAR (253 aa)). Gly356 is a binding site for L-glutamine. Cys383 (nucleophile; for glutamine hydrolysis) is an active-site residue. L-glutamine contacts are provided by residues 384–387 (LGMQ), Glu407, and Arg473. Residues His520 and Glu522 contribute to the active site.

Belongs to the CTP synthase family. As to quaternary structure, homotetramer.

It carries out the reaction UTP + L-glutamine + ATP + H2O = CTP + L-glutamate + ADP + phosphate + 2 H(+). The enzyme catalyses L-glutamine + H2O = L-glutamate + NH4(+). It catalyses the reaction UTP + NH4(+) + ATP = CTP + ADP + phosphate + 2 H(+). It participates in pyrimidine metabolism; CTP biosynthesis via de novo pathway; CTP from UDP: step 2/2. With respect to regulation, allosterically activated by GTP, when glutamine is the substrate; GTP has no effect on the reaction when ammonia is the substrate. The allosteric effector GTP functions by stabilizing the protein conformation that binds the tetrahedral intermediate(s) formed during glutamine hydrolysis. Inhibited by the product CTP, via allosteric rather than competitive inhibition. Its function is as follows. Catalyzes the ATP-dependent amination of UTP to CTP with either L-glutamine or ammonia as the source of nitrogen. Regulates intracellular CTP levels through interactions with the four ribonucleotide triphosphates. The sequence is that of CTP synthase from Variovorax paradoxus (strain S110).